We begin with the raw amino-acid sequence, 311 residues long: Olfactory receptor 4S2 (311 aa).

At 1 to 23 the chain is on the extracellular side; the sequence is MEKINNVTEFIFWGLSQSPEIEK. Asn-6 carries N-linked (GlcNAc...) asparagine glycosylation. A helical membrane pass occupies residues 24-47; sequence VCFVVFSFFYIIILLGNLLIMLTV. Residues 48-55 lie on the Cytoplasmic side of the membrane; it reads CLSNLFKS. Residues 56–77 form a helical membrane-spanning segment; the sequence is PMYFFLSFLSFVDICYSSVTAP. Over 78 to 98 the chain is Extracellular; sequence KMIVDLLAKDKTISYVGCMLQ. Cys-95 and Cys-187 are joined by a disulfide. The helical transmembrane segment at 99–118 threads the bilayer; sequence LFGVHFFGCTEIFILTVMAY. Residues 119–137 lie on the Cytoplasmic side of the membrane; it reads DRYVAICKPLHYMTIMNRE. Residues 138-156 form a helical membrane-spanning segment; sequence TCNKMLLGTWVGGFLHSII. The Extracellular portion of the chain corresponds to 157 to 193; it reads QVALVVQLPFCGPNEIDHYFCDVHPVLKLACTETYIV. A helical transmembrane segment spans residues 194–217; it reads GVVVTANSGTIALGSFVILLISYS. At 218 to 233 the chain is on the cytoplasmic side; the sequence is IILVSLRKQSAEGRRK. A helical transmembrane segment spans residues 234–256; that stretch reads ALSTCGSHIAMVVIFFGPCTFMY. Over 257-267 the chain is Extracellular; the sequence is MRPDTTFSEDK. Residues 268 to 287 form a helical membrane-spanning segment; it reads MVAVFYTIITPMLNPLIYTL. The Cytoplasmic portion of the chain corresponds to 288–311; the sequence is RNAEVKNAMKKLWGRNVFLEAKGK.

It belongs to the G-protein coupled receptor 1 family.

It localises to the cell membrane. In terms of biological role, odorant receptor. The chain is Olfactory receptor 4S2 (OR4S2) from Homo sapiens (Human).